The following is a 393-amino-acid chain: UPF0496 protein At2g18630 (393 aa).

Positions 1-20 (MMGGKSSKSKKNVEFGSPST) are disordered. Residues 149–222 (VNQFEEENED…RLRNIKTWRR (74 aa)) adopt a coiled-coil conformation. Helical transmembrane passes span 226-246 (MVFV…AAVA) and 249-269 (PVVA…GKWC). Positions 299-356 (KEMDNISILVRKVEVEIESLLKKAEFAITEEKEVRLAIDEIKKKLDVFTETIEELGEH) form a coiled coil.

Belongs to the UPF0496 family.

It is found in the membrane. This Arabidopsis thaliana (Mouse-ear cress) protein is UPF0496 protein At2g18630.